The primary structure comprises 326 residues: F-box/LRR-repeat protein 12 (326 aa).

Residues 1–47 form the F-box domain; that stretch reads MATLVELPDSVLLEIFSYLPVRDRIRISRVCHRWKRLVDDRWLWRHV. LRR repeat units follow at residues 51–78, 86–111, 113–133, 161–185, 186–211, 212–236, 237–261, and 266–291; these read LYTM…RMGG, APQL…CLHV, DLSM…ELHS, VPAF…VLGG, TYRV…EVLG, CTLS…IRLT, VRGL…CLQG, and PEMP…ELQG.

In terms of assembly, interacts with SKP1 and CUL1.

It participates in protein modification; protein ubiquitination. In terms of biological role, substrate-recognition component of the SCF (SKP1-CUL1-F-box protein)-type E3 ubiquitin ligase complex. Mediates the polyubiquitination and proteasomal degradation of CAMK1 leading to disruption of cyclin D1/CDK4 complex assembly which results in G1 cell cycle arrest in lung epithelia. The chain is F-box/LRR-repeat protein 12 (FBXL12) from Homo sapiens (Human).